Reading from the N-terminus, the 266-residue chain is Glucosamine-6-phosphate deaminase (266 aa).

The active-site Proton acceptor; for enolization step is the Asp72. Asp141 serves as the catalytic For ring-opening step. His143 functions as the Proton acceptor; for ring-opening step in the catalytic mechanism. The active-site For ring-opening step is the Glu148.

The protein belongs to the glucosamine/galactosamine-6-phosphate isomerase family. NagB subfamily. Homohexamer.

The enzyme catalyses alpha-D-glucosamine 6-phosphate + H2O = beta-D-fructose 6-phosphate + NH4(+). Its pathway is amino-sugar metabolism; N-acetylneuraminate degradation; D-fructose 6-phosphate from N-acetylneuraminate: step 5/5. With respect to regulation, allosterically activated by N-acetylglucosamine 6-phosphate (GlcNAc6P). Catalyzes the reversible isomerization-deamination of glucosamine 6-phosphate (GlcN6P) to form fructose 6-phosphate (Fru6P) and ammonium ion. In Aeromonas salmonicida (strain A449), this protein is Glucosamine-6-phosphate deaminase.